Reading from the N-terminus, the 459-residue chain is Type I restriction enzyme HindI specificity subunit (459 aa).

It belongs to the type-I restriction system S methylase family. The type I restriction/modification system is composed of three polypeptides R, M and S; the restriction enzyme has stoichiometry R(2)M(2)S(1) while the methyltransferase is M(2)S(1).

The specificity (S) subunit of a type I restriction enzyme; this subunit dictates DNA sequence specificity. The M and S subunits together form a methyltransferase (MTase) that methylates adenosines in the sequence 5'-RAACN(5)TAG-3'. Methylation protects against cleavage by HindI. In the presence of the R subunit the complex can also act as an endonuclease, binding to the same target sequence but cutting the DNA some distance from this site. Whether the DNA is cut or modified depends on the methylation state of the target sequence. When the target site is unmodified, the DNA is cut. When the target site is hemimethylated, the complex acts as a maintenance MTase modifying the DNA so that both strands become methylated. After locating a non-methylated recognition site, the enzyme complex serves as a molecular motor that translocates DNA in an ATP-dependent manner until a collision occurs that triggers cleavage. This Haemophilus influenzae (strain ATCC 51907 / DSM 11121 / KW20 / Rd) protein is Type I restriction enzyme HindI specificity subunit.